Here is a 434-residue protein sequence, read N- to C-terminus: 4-hydroxy-3-methylbut-2-en-1-yl diphosphate synthase (flavodoxin) (434 aa).

Positions 1–15 (MQSEAQSPRSSQICS) are enriched in polar residues. Positions 1–20 (MQSEAQSPRSSQICSTEPVF) are disordered. [4Fe-4S] cluster-binding residues include Cys322, Cys325, Cys368, and Glu375.

This sequence belongs to the IspG family. Requires [4Fe-4S] cluster as cofactor.

It catalyses the reaction (2E)-4-hydroxy-3-methylbut-2-enyl diphosphate + oxidized [flavodoxin] + H2O + 2 H(+) = 2-C-methyl-D-erythritol 2,4-cyclic diphosphate + reduced [flavodoxin]. The protein operates within isoprenoid biosynthesis; isopentenyl diphosphate biosynthesis via DXP pathway; isopentenyl diphosphate from 1-deoxy-D-xylulose 5-phosphate: step 5/6. Converts 2C-methyl-D-erythritol 2,4-cyclodiphosphate (ME-2,4cPP) into 1-hydroxy-2-methyl-2-(E)-butenyl 4-diphosphate. This chain is 4-hydroxy-3-methylbut-2-en-1-yl diphosphate synthase (flavodoxin), found in Burkholderia mallei (strain ATCC 23344).